A 530-amino-acid polypeptide reads, in one-letter code: MADPSEQKEKVVKEKKEKVKKEKVVKEKVAKASSSGQKKKDVKKETGLGLSVKKDENFGEWYSEVCKQDMIEYYDISGCYILRPWSMAIWEIMQIFFDAEIKKMKVKNCYFPLFVSPGVLEKEKDHIEGFAPEVAWVTKSGKSDLEVPIAIRPTSETVMYPYYSKWIRGHRDLPLKLNQWCNVVRWEFSNPTPFIRSREFLWQEGHTAFATKAEADEEVLQILELYRRIYEEYLAVPVVKGMKSENEKFAGGLYTTSVEAFIPNTGRGVQGATSHCLGQNFAKMFEINFENEKAETEMVWQNSWAYSTRTIGVMIMTHGDDKGLVLPPKVASVQVVVIPVPYKDANTQGIYDACTATASALCEAGIRAEEDLRDNYSPGWKYSDWEMKGVPLRIEIGPRDLENDQVRTVRRDNGVKEDIPRGSLVEHVKELLEKIQQNMYEVAKQKREACVQEVKTWDEFIKALNEKKLILAPWCDEEEVERDVKARTKGETGAAKTLCSPFDQPELPEGTLCFASGKPAKKWTYWGRSY.

Belongs to the class-II aminoacyl-tRNA synthetase family.

It is found in the cytoplasm. It localises to the cytosol. It carries out the reaction tRNA(Pro) + L-proline + ATP = L-prolyl-tRNA(Pro) + AMP + diphosphate. Functionally, catalyzes the attachment of proline to tRNA(Pro) in a two-step reaction: proline is first activated by ATP to form Pro-AMP and then transferred to the acceptor end of tRNA(Pro). The protein is Proline--tRNA ligase, cytoplasmic of Arabidopsis thaliana (Mouse-ear cress).